The chain runs to 718 residues: Putative methyltransferase NSUN7 (718 aa).

The active-site Nucleophile is the C439. Disordered stretches follow at residues 536–557 (GKSSKREKKKKKSKTSLTKGAT), 578–616 (ANLSETVTKPPLPQKNTAQVGASSQTRKPNKLAPHPAVP), and 694–718 (SLSRKEEKPKDDTPSSLLRPPRRWL). A compositionally biased stretch (basic residues) spans 538–549 (SSKREKKKKKSK). Positions 591-604 (QKNTAQVGASSQTR) are enriched in polar residues. Residues 696–706 (SRKEEKPKDDT) are compositionally biased toward basic and acidic residues.

The protein belongs to the class I-like SAM-binding methyltransferase superfamily. RsmB/NOP family.

Functionally, may have S-adenosyl-L-methionine-dependent methyl-transferase activity. This is Putative methyltransferase NSUN7 (NSUN7) from Homo sapiens (Human).